The primary structure comprises 379 residues: Phospho-N-acetylmuramoyl-pentapeptide-transferase (379 aa).

10 consecutive transmembrane segments (helical) span residues 27–47 (FRTA…GPAV), 76–96 (TMGG…WADL), 100–120 (FVWI…TDDY), 135–155 (AKMG…VLVQ), 185–205 (PHIW…VLVG), 218–238 (GLAI…TYVS), 255–275 (VGEL…FLWY), 283–303 (FMGD…AVII), 307–327 (LLLP…ILQV), and 356–376 (KIIV…LTTL).

It belongs to the glycosyltransferase 4 family. MraY subfamily. Requires Mg(2+) as cofactor.

It is found in the cell inner membrane. It catalyses the reaction UDP-N-acetyl-alpha-D-muramoyl-L-alanyl-gamma-D-glutamyl-meso-2,6-diaminopimeloyl-D-alanyl-D-alanine + di-trans,octa-cis-undecaprenyl phosphate = di-trans,octa-cis-undecaprenyl diphospho-N-acetyl-alpha-D-muramoyl-L-alanyl-D-glutamyl-meso-2,6-diaminopimeloyl-D-alanyl-D-alanine + UMP. Its pathway is cell wall biogenesis; peptidoglycan biosynthesis. In terms of biological role, catalyzes the initial step of the lipid cycle reactions in the biosynthesis of the cell wall peptidoglycan: transfers peptidoglycan precursor phospho-MurNAc-pentapeptide from UDP-MurNAc-pentapeptide onto the lipid carrier undecaprenyl phosphate, yielding undecaprenyl-pyrophosphoryl-MurNAc-pentapeptide, known as lipid I. The chain is Phospho-N-acetylmuramoyl-pentapeptide-transferase from Koribacter versatilis (strain Ellin345).